The sequence spans 393 residues: Phosphoglycerate kinase (393 aa).

Substrate-binding positions include 21-23 (DLN), Arg36, 59-62 (HLGR), Arg113, and Arg146. ATP is bound by residues Lys197, Glu319, and 345 to 348 (GGDT).

Belongs to the phosphoglycerate kinase family. As to quaternary structure, monomer.

The protein resides in the cytoplasm. The catalysed reaction is (2R)-3-phosphoglycerate + ATP = (2R)-3-phospho-glyceroyl phosphate + ADP. Its pathway is carbohydrate degradation; glycolysis; pyruvate from D-glyceraldehyde 3-phosphate: step 2/5. The polypeptide is Phosphoglycerate kinase (Nitratidesulfovibrio vulgaris (strain ATCC 29579 / DSM 644 / CCUG 34227 / NCIMB 8303 / VKM B-1760 / Hildenborough) (Desulfovibrio vulgaris)).